Reading from the N-terminus, the 198-residue chain is MEKPATRKKKSQAPKEEAGAQKATVKGEKTSKGKKATKKPRKPRRPRKEPVLSPEDEAHIFDAFDASFKDDFEGVPVFVPFQRKKPYECGECGRIFKHKTDHIRHQRVHTGEKPFKCDQCGKTFRHSSDVTKHQRIHTGEKPFKCGECGKAFNCGSNLLKHQKTHTGEKPYGCEECGKSFAYSSCLIRHRKRHPRKKH.

The segment covering 1-12 (MEKPATRKKKSQ) has biased composition (basic residues). The interval 1–56 (MEKPATRKKKSQAPKEEAGAQKATVKGEKTSKGKKATKKPRKPRRPRKEPVLSPED) is disordered. Residues 13-31 (APKEEAGAQKATVKGEKTS) are compositionally biased toward basic and acidic residues. A compositionally biased stretch (basic residues) spans 32-47 (KGKKATKKPRKPRRPR). 4 consecutive C2H2-type zinc fingers follow at residues 87–109 (YECG…QRVH), 115–137 (FKCD…QRIH), 143–165 (FKCG…QKTH), and 171–193 (YGCE…RKRH).

The protein belongs to the krueppel C2H2-type zinc-finger protein family. In terms of tissue distribution, predominantly in the spermatocytes and spermatids of testes. It is also expressed in the fetus and embryonic stem cells at lower levels.

The protein resides in the nucleus. In terms of biological role, a putative DNA-binding regulatory protein associated with meiosis in spermatogenesis. The polypeptide is Zinc finger protein 41 (Zfp41) (Mus musculus (Mouse)).